The chain runs to 842 residues: MAMASSPACHFRHPPRLRLLLPLSTSAPHPWLYSWSHPRQRGRLRAPPAALDLRPEPSPSSDSDDEDAVGASRSSGRSTMSLILSRLRRAGYSGEDPRAAAPPHPPRGSVEDVFRADDGVLPNARGGFDADDEERALGDARFPWERPMPPPEAAPRSARSPTWMAELTLPAAELRRLRHAAIRIKSRTKVGGAGVTREIVEKIKEKWKTEEVVRVKVSGTPALNMRLFHEILERKTGGLVIWRSGTSVSLYRGVDYDEPEPTKKSKKNSQSLAMDFPIKGSSNPSLLPTETANSVRDSNVALVSNAAKEELVVQAPEIKYEDEIDKLLDELGPRYTDWPGSDPLPVDADLLPANMPGYKPPFRVLPYGVRPSLSRRDTTNLRRLARGLPPHFALGRSRQLQGLANAMVKLWEKSSIAKIALKRGVQLTTSERMAEDIKKLTGGVMLSRNNEFIVFYRGKDFLSSELAEVLLERERLAKSLQDEEEARRKAASYFSSAETYAQPTVAGTLGETLEANSKYGTKHDENHADKMARTIEAARHADLVRKLEWKLSLAQKKMEKAERVLGKVETALRPTEDSRPPETITDEERFMFRKLGLRMKAFLLLGRRGVFDGTIENMHLHWKYRELVKILVKAKSFADVKRIALSLEAESGGILVSVDKVSKGYAIVVFRGKNYRRPSSLRPRNLLSKRKALARSIELQRHQALSRHFAKLNRKVERLKAELVQMEDVKEQGDEELYAKLDAAYSSDDEDMEDEDDEAYLKRFDNEVAGATADDDGSDDYTSAADEADYPDSDDEAGDCSEDEGEDDEDEAAAGVSDAGFHGEVVGFSSDTDRRNHDVNEY.

Residues 1–82 (MAMASSPACH…RSSGRSTMSL (82 aa)) constitute a chloroplast and mitochondrion transit peptide. 3 disordered regions span residues 49-80 (AALD…RSTM), 141-160 (RFPW…SARS), and 254-290 (VDYD…LPTE). In terms of domain architecture, CRM 1 spans 167–263 (LTLPAAELRR…VDYDEPEPTK (97 aa)). Residues 280 to 290 (GSSNPSLLPTE) are compositionally biased toward polar residues. CRM domains lie at 371–468 (PSLS…ELAE) and 582–682 (ETIT…SSLR). The stretch at 703-732 (QALSRHFAKLNRKVERLKAELVQMEDVKEQ) forms a coiled coil. Residues 768-842 (VAGATADDDG…DRRNHDVNEY (75 aa)) are disordered. The segment covering 786–812 (DEADYPDSDDEAGDCSEDEGEDDEDEA) has biased composition (acidic residues). A compositionally biased stretch (basic and acidic residues) spans 831 to 842 (DTDRRNHDVNEY).

As to quaternary structure, interacts with RNA. Part of large ribonucleo-protein particles that contain CAF1 and/or CAF2, and RNC1.

Its subcellular location is the plastid. The protein resides in the chloroplast stroma. It is found in the mitochondrion. Binds specific group II introns in chloroplasts and facilitates their splicing. Acts on subgroup IIB introns. The substrates of the subgroup IIB also require the CRM domain proteins CAF1 or CAF2, with a simultaneous binding of CFM3 and CAF1 or CAF2. May influence the biogenesis of the mitochondrial small ribosomal subunit. The polypeptide is CRM-domain containing factor CFM3, chloroplastic/mitochondrial (Zea mays (Maize)).